Reading from the N-terminus, the 110-residue chain is Hydrogenase maturation factor HypA (110 aa).

A Ni(2+)-binding site is contributed by histidine 2. The Zn(2+) site is built by cysteine 70, cysteine 73, cysteine 86, and cysteine 89.

The protein belongs to the HypA/HybF family.

Involved in the maturation of [NiFe] hydrogenases. Required for nickel insertion into the metal center of the hydrogenase. In Geobacter sp. (strain M21), this protein is Hydrogenase maturation factor HypA.